Consider the following 91-residue polypeptide: Large ribosomal subunit protein bL31 (91 aa).

The interval Arg-62 to Gly-91 is disordered.

The protein belongs to the bacterial ribosomal protein bL31 family. Type A subfamily. Part of the 50S ribosomal subunit.

In terms of biological role, binds the 23S rRNA. The polypeptide is Large ribosomal subunit protein bL31 (Thermosynechococcus vestitus (strain NIES-2133 / IAM M-273 / BP-1)).